We begin with the raw amino-acid sequence, 287 residues long: ATP synthase gamma chain (287 aa).

This sequence belongs to the ATPase gamma chain family. As to quaternary structure, F-type ATPases have 2 components, CF(1) - the catalytic core - and CF(0) - the membrane proton channel. CF(1) has five subunits: alpha(3), beta(3), gamma(1), delta(1), epsilon(1). CF(0) has three main subunits: a, b and c.

It is found in the cell inner membrane. Its function is as follows. Produces ATP from ADP in the presence of a proton gradient across the membrane. The gamma chain is believed to be important in regulating ATPase activity and the flow of protons through the CF(0) complex. This is ATP synthase gamma chain from Klebsiella pneumoniae (strain 342).